Reading from the N-terminus, the 974-residue chain is Cell division control protein 15 (974 aa).

The 248-residue stretch at 25 to 272 folds into the Protein kinase domain; sequence YHLKQVIGRG…ADQLLKHVWI (248 aa). ATP is bound by residues 31 to 39 and lysine 54; that span reads IGRGSYGVV. Aspartate 146 functions as the Proton acceptor in the catalytic mechanism. The tract at residues 360–702 is self association domain; that stretch reads CSLENIADTI…ITAICVEMSL (343 aa). Residues 554 to 563 show a composition bias toward low complexity; it reads SSSLPLSSSP. The segment at 554–592 is disordered; it reads SSSLPLSSSPTRNSPVNSVQSPSRSPVHSLMATRPSSPM. 2 positions are modified to phosphoserine: serine 561 and serine 567. Residues 564-579 show a composition bias toward polar residues; it reads TRNSPVNSVQSPSRSP. Residues 751–974 are auto-inhibitory domain; sequence TVGSSESHSV…FSVPITTFQT (224 aa). At threonine 870 the chain carries Phosphothreonine. The tract at residues 941-974 is disordered; it reads AAIGSSPTKDERSNLRSSKDKSDGFSVPITTFQT. Residues 948 to 963 show a composition bias toward basic and acidic residues; it reads TKDERSNLRSSKDKSD.

It belongs to the protein kinase superfamily. Ser/Thr protein kinase family. As to quaternary structure, homodimer. Interacts with TEM1. Post-translationally, phosphorylation by CDK1 reduces the binding to the mother spindle pole body. The extent of phosphorylation gradually increases during cell-cycle progression until some point during late anaphase/telophase when it is rapidly dephosphorylated by CDC14. Phosphorylation inhibits kinase activity and dephosphorylation by CDC14 activates CDC15.

The protein localises to the cytoplasm. It is found in the cytoskeleton. The protein resides in the spindle pole. Its subcellular location is the bud neck. The catalysed reaction is L-seryl-[protein] + ATP = O-phospho-L-seryl-[protein] + ADP + H(+). The enzyme catalyses L-threonyl-[protein] + ATP = O-phospho-L-threonyl-[protein] + ADP + H(+). Its activity is regulated as follows. Kinase activity is inhibited by phosphorylation and activated by dephosphorylation by CDC14. Protein kinase of the mitotic exit network (MEN) essential for late nuclear division in the mitotic cycle. Promotes mitotic exit by phosphorylating DBF2 and directly switching on DBF2 kinase activity. Involved in the localization of DBF2 and DBF20 to the neck which is necessary to undergo cytokinesis. Plays a role in segregation of chromosomes during recovery from spindle checkpoint activation. Required for spindle pole localization of CDK1 and inactivation of CDC2 kinase activity at the end of mitosis. Required for spindle disassembly after meiosis II and plays a role in spore morphogenesis. The sequence is that of Cell division control protein 15 (CDC15) from Saccharomyces cerevisiae (strain ATCC 204508 / S288c) (Baker's yeast).